The chain runs to 246 residues: Carboxylesterase (246 aa).

Ser-93 functions as the Nucleophile in the catalytic mechanism. Residues Asp-192 and His-222 each act as charge relay system in the active site.

Belongs to the lipase/esterase LIP3/BchO family. As to quaternary structure, homodimer.

The enzyme catalyses a carboxylic ester + H2O = an alcohol + a carboxylate + H(+). In terms of biological role, involved in the detoxification of xenobiotics. Shows maximal activity with C6 substrates, with gradually decreasing activity from C8 to C12 substrates. No activity for higher chain length substrates acids rather than long-chain ones. This chain is Carboxylesterase (est), found in Bacillus subtilis (strain 168).